The primary structure comprises 363 residues: UDP-3-O-acylglucosamine N-acyltransferase (363 aa).

Residue His-237 is the Proton acceptor of the active site. The interval Glu-338–Ser-363 is disordered.

Belongs to the transferase hexapeptide repeat family. LpxD subfamily. As to quaternary structure, homotrimer.

The catalysed reaction is a UDP-3-O-[(3R)-3-hydroxyacyl]-alpha-D-glucosamine + a (3R)-hydroxyacyl-[ACP] = a UDP-2-N,3-O-bis[(3R)-3-hydroxyacyl]-alpha-D-glucosamine + holo-[ACP] + H(+). It functions in the pathway bacterial outer membrane biogenesis; LPS lipid A biosynthesis. Its function is as follows. Catalyzes the N-acylation of UDP-3-O-acylglucosamine using 3-hydroxyacyl-ACP as the acyl donor. Is involved in the biosynthesis of lipid A, a phosphorylated glycolipid that anchors the lipopolysaccharide to the outer membrane of the cell. In Synechococcus sp. (strain JA-2-3B'a(2-13)) (Cyanobacteria bacterium Yellowstone B-Prime), this protein is UDP-3-O-acylglucosamine N-acyltransferase.